The following is a 318-amino-acid chain: Porphobilinogen deaminase (318 aa).

Cys-241 bears the S-(dipyrrolylmethanemethyl)cysteine mark.

Belongs to the HMBS family. In terms of assembly, monomer. Dipyrromethane serves as cofactor.

The enzyme catalyses 4 porphobilinogen + H2O = hydroxymethylbilane + 4 NH4(+). It participates in porphyrin-containing compound metabolism; protoporphyrin-IX biosynthesis; coproporphyrinogen-III from 5-aminolevulinate: step 2/4. Its function is as follows. Tetrapolymerization of the monopyrrole PBG into the hydroxymethylbilane pre-uroporphyrinogen in several discrete steps. This Geobacter sp. (strain M21) protein is Porphobilinogen deaminase.